A 100-amino-acid polypeptide reads, in one-letter code: Large ribosomal subunit protein bL27 (100 aa).

Positions 1–13 (MNKLYWLTDLQLF) are excised as a propeptide. The disordered stretch occupies residues 17–39 (KGVGSSKNGRDSNPKYLGAKLGD).

This sequence belongs to the bacterial ribosomal protein bL27 family. The N-terminus is cleaved by ribosomal processing cysteine protease Prp.

The polypeptide is Large ribosomal subunit protein bL27 (Ureaplasma parvum serovar 3 (strain ATCC 700970)).